A 586-amino-acid chain; its full sequence is Actin-related protein 9 (586 aa).

The tract at residues 141–169 (STPIVDKDADVDPLQRSTPDDTEPNSEEN) is disordered.

Belongs to the actin family. ARP8 subfamily.

The protein is Actin-related protein 9 (ARP9) of Oryza sativa subsp. japonica (Rice).